A 246-amino-acid chain; its full sequence is UDP-N-acetyl-D-mannosaminuronic acid transferase (246 aa).

The protein belongs to the glycosyltransferase 26 family.

The catalysed reaction is UDP-N-acetyl-alpha-D-mannosaminouronate + N-acetyl-alpha-D-glucosaminyl-di-trans,octa-cis-undecaprenyl diphosphate = beta-D-ManNAcA-(1-&gt;4)-alpha-D-GlcNAc-di-trans,octa-cis-undecaprenyl diphosphate + UDP + H(+). It functions in the pathway bacterial outer membrane biogenesis; enterobacterial common antigen biosynthesis. Its function is as follows. Catalyzes the synthesis of Und-PP-GlcNAc-ManNAcA (Lipid II), the second lipid-linked intermediate involved in enterobacterial common antigen (ECA) synthesis. In Salmonella arizonae (strain ATCC BAA-731 / CDC346-86 / RSK2980), this protein is UDP-N-acetyl-D-mannosaminuronic acid transferase.